The primary structure comprises 501 residues: Proline--tRNA ligase (501 aa).

The protein belongs to the class-II aminoacyl-tRNA synthetase family. ProS type 3 subfamily. In terms of assembly, homodimer.

The protein localises to the cytoplasm. It carries out the reaction tRNA(Pro) + L-proline + ATP = L-prolyl-tRNA(Pro) + AMP + diphosphate. In terms of biological role, catalyzes the attachment of proline to tRNA(Pro) in a two-step reaction: proline is first activated by ATP to form Pro-AMP and then transferred to the acceptor end of tRNA(Pro). The polypeptide is Proline--tRNA ligase (Halobacterium salinarum (strain ATCC 29341 / DSM 671 / R1)).